The chain runs to 242 residues: UPF0246 protein SPN23F15130 (242 aa).

Belongs to the UPF0246 family.

The protein is UPF0246 protein SPN23F15130 of Streptococcus pneumoniae (strain ATCC 700669 / Spain 23F-1).